Here is a 314-residue protein sequence, read N- to C-terminus: Dual specificity protein phosphatase 2 (314 aa).

One can recognise a Rhodanese domain in the interval 23 to 144 (EAERTLLLDC…FQGCCPDLCS (122 aa)). Residues 172-313 (GPVEILPYLF…LLQFETQVLC (142 aa)) form the Tyrosine-protein phosphatase domain. Cys-257 functions as the Phosphocysteine intermediate in the catalytic mechanism.

This sequence belongs to the protein-tyrosine phosphatase family. Non-receptor class dual specificity subfamily. Interacts with MAPK14; this interaction does not lead to catalytic activation of DUSP2 and dephosphrylation of MAPK14. In terms of tissue distribution, expressed in hematopoietic tissues.

It localises to the nucleus. It carries out the reaction O-phospho-L-tyrosyl-[protein] + H2O = L-tyrosyl-[protein] + phosphate. The enzyme catalyses O-phospho-L-threonyl-[protein] + H2O = L-threonyl-[protein] + phosphate. Functionally, dephosphorylates both phosphorylated Thr and Tyr residues in MAPK1, and dephosphorylation of phosphotyrosine is slightly faster than that of phosphothreonine. Can dephosphorylate MAPK1. This Homo sapiens (Human) protein is Dual specificity protein phosphatase 2.